We begin with the raw amino-acid sequence, 168 residues long: Thiol peroxidase (168 aa).

The Thioredoxin domain occupies 19 to 168; it reads PQAGSKAQAF…YDAALNVLKA (150 aa). Cys61 serves as the catalytic Cysteine sulfenic acid (-SOH) intermediate. A disulfide bond links Cys61 and Cys95.

This sequence belongs to the peroxiredoxin family. Tpx subfamily. In terms of assembly, homodimer.

It catalyses the reaction a hydroperoxide + [thioredoxin]-dithiol = an alcohol + [thioredoxin]-disulfide + H2O. In terms of biological role, thiol-specific peroxidase that catalyzes the reduction of hydrogen peroxide and organic hydroperoxides to water and alcohols, respectively. Plays a role in cell protection against oxidative stress by detoxifying peroxides. This Salmonella typhi protein is Thiol peroxidase.